Consider the following 257-residue polypeptide: UPF0246 protein KPK_4750 (257 aa).

This sequence belongs to the UPF0246 family.

The polypeptide is UPF0246 protein KPK_4750 (Klebsiella pneumoniae (strain 342)).